The primary structure comprises 138 residues: Large ribosomal subunit protein uL16 (138 aa).

Residues 1-13 are compositionally biased toward basic residues; that stretch reads MLQPKRRKYRKEQ. The interval 1 to 20 is disordered; it reads MLQPKRRKYRKEQKGRNTGI.

The protein belongs to the universal ribosomal protein uL16 family. Part of the 50S ribosomal subunit.

In terms of biological role, binds 23S rRNA and is also seen to make contacts with the A and possibly P site tRNAs. The protein is Large ribosomal subunit protein uL16 of Burkholderia mallei (strain NCTC 10247).